Consider the following 2046-residue polypeptide: Protein TIC 214 (2046 aa).

Transmembrane regions (helical) follow at residues 18–38 (VSGP…LPFG), 54–74 (LYGI…FLSM), 79–99 (IYAA…YTFC), 125–145 (ILSL…LLAN), 163–183 (ISFM…FINL), and 214–234 (TFSV…PLIF). Disordered regions lie at residues 278–299 (DEDR…EDRS), 320–472 (ARSV…VPRE), and 1833–1898 (AKDS…EDEI). Composition is skewed to basic and acidic residues over residues 322 to 335 (SVAE…EHRS), 344 to 368 (SVAE…RSVA), and 378 to 457 (AKKD…RSVA). Residues 1833–1866 (AKDSNANDINAKDSNANDINANDSNAKDSNANDI) are compositionally biased toward low complexity. Residues 1882-1898 (NAKDSNADVPKKKEDEI) are compositionally biased toward basic and acidic residues.

It belongs to the TIC214 family. Part of the Tic complex.

It is found in the plastid. It localises to the chloroplast inner membrane. Its function is as follows. Involved in protein precursor import into chloroplasts. May be part of an intermediate translocation complex acting as a protein-conducting channel at the inner envelope. The chain is Protein TIC 214 from Pinus koraiensis (Korean pine).